A 106-amino-acid chain; its full sequence is Nucleoid-associated protein bll8115 (106 aa).

This sequence belongs to the YbaB/EbfC family. In terms of assembly, homodimer.

It is found in the cytoplasm. The protein resides in the nucleoid. Binds to DNA and alters its conformation. May be involved in regulation of gene expression, nucleoid organization and DNA protection. The chain is Nucleoid-associated protein bll8115 from Bradyrhizobium diazoefficiens (strain JCM 10833 / BCRC 13528 / IAM 13628 / NBRC 14792 / USDA 110).